We begin with the raw amino-acid sequence, 313 residues long: Mas-related G-protein coupled receptor member A4 (313 aa).

Over 1 to 25 (MAPTTTNPMNETIPGSIDIETLIPN) the chain is Extracellular. Asparagine 10 carries an N-linked (GlcNAc...) asparagine glycan. The chain crosses the membrane as a helical span at residues 26 to 46 (LMIIIFGLVGLTGNVILFWLL). Over 47-54 (GFHLHRNA) the chain is Cytoplasmic. The chain crosses the membrane as a helical span at residues 55 to 75 (FLVYILNLALADFLFLLCHII). Residue asparagine 76 is glycosylated (N-linked (GlcNAc...) asparagine). Over 76 to 93 (NSTMLLLKVHLPNNILNH) the chain is Extracellular. A helical transmembrane segment spans residues 94-114 (CFDIIMTVLYITGLSMLSAIS). The Cytoplasmic segment spans residues 115–137 (TERCLSVLCPIWYRCRRPEHTST). A helical transmembrane segment spans residues 138–158 (VLCAVIWFLPLLICILNGYFC). Residues 159-182 (HFFGPKYVIDSVCLATNFFIRTYP) lie on the Extracellular side of the membrane. The chain crosses the membrane as a helical span at residues 183-203 (MFLFIVLCLSTLALLARLFCG). At 204-219 (AGKTKFTRLFVTIMLT) the chain is on the cytoplasmic side. Residues 220 to 240 (VLVFLLCGLPLGFFWFLVPWI) form a helical membrane-spanning segment. Topologically, residues 241 to 255 (NRDFSVLDYILFQTS) are extracellular. Residues 256 to 276 (LVLTSVNSCANPIIYFFVGSF) traverse the membrane as a helical segment. Residues 277-313 (RHRLKHKTLKMVLQSALQDTPETPENMVEMSRSKAEP) lie on the Cytoplasmic side of the membrane.

Belongs to the G-protein coupled receptor 1 family. Mas subfamily. In terms of tissue distribution, expressed in a subset of sensory neurons that includes nociceptors. Expressed in the subclass of non-peptidergic sensory neurons that are IB4(+) and VR1(-).

Its subcellular location is the cell membrane. In terms of biological role, orphan receptor. May be a receptor for RFamide-family neuropeptides such as NPFF and NPAF, which are analgesic in vivo. May regulate nociceptor function and/or development, including the sensation or modulation of pain. This chain is Mas-related G-protein coupled receptor member A4 (Mrgpra4), found in Mus musculus (Mouse).